Here is a 104-residue protein sequence, read N- to C-terminus: MNREEATLLGFEIVAYAGDARSKLLEALNAAQAGEYDRAEELVAAADDCIVDAHKAQTSLLAKEAQGDDIELSVTLMHGQDHLMTTILLKDLMKHLIELYKRGS.

A PTS EIIA type-3 domain is found at glutamate 4 to arginine 102. Residue histidine 78 is the Tele-phosphohistidine intermediate of the active site. Histidine 78 bears the Phosphohistidine; by HPr mark. A Mg(2+)-binding site is contributed by aspartate 81.

In terms of assembly, homotrimer. It depends on Mg(2+) as a cofactor.

The protein resides in the cytoplasm. Functionally, the phosphoenolpyruvate-dependent sugar phosphotransferase system (sugar PTS), a major carbohydrate active transport system, catalyzes the phosphorylation of incoming sugar substrates concomitantly with their translocation across the cell membrane. The enzyme II LacEF PTS system is involved in lactose transport. In Streptococcus mutans serotype c (strain ATCC 700610 / UA159), this protein is PTS system lactose-specific EIIA component.